Here is a 580-residue protein sequence, read N- to C-terminus: Acyl-coenzyme A synthetase ACSM4, mitochondrial (580 aa).

Residues Met1–Arg22 constitute a mitochondrion transit peptide. ATP contacts are provided by residues Thr229–Lys237, Glu368–Thr373, Asp455, Arg470, and Lys566.

Belongs to the ATP-dependent AMP-binding enzyme family. Mg(2+) serves as cofactor. The cofactor is Mn(2+).

The protein localises to the mitochondrion. It catalyses the reaction a medium-chain fatty acid + ATP + CoA = a medium-chain fatty acyl-CoA + AMP + diphosphate. It carries out the reaction hexanoate + ATP + CoA = hexanoyl-CoA + AMP + diphosphate. The catalysed reaction is octanoate + ATP + CoA = octanoyl-CoA + AMP + diphosphate. The enzyme catalyses decanoate + ATP + CoA = decanoyl-CoA + AMP + diphosphate. It catalyses the reaction dodecanoate + ATP + CoA = dodecanoyl-CoA + AMP + diphosphate. Its function is as follows. Catalyzes the activation of fatty acids by CoA to produce an acyl-CoA, the first step in fatty acid metabolism. Capable of activating medium-chain fatty acids with a preference for C6-12 fatty acids. This is Acyl-coenzyme A synthetase ACSM4, mitochondrial (ACSM4) from Homo sapiens (Human).